We begin with the raw amino-acid sequence, 373 residues long: Probable protein phosphatase 2C 73 (373 aa).

Residues 61–354 (LASLFSKRGE…DDMSVVCLFL (294 aa)) enclose the PPM-type phosphatase domain. Residues aspartate 97, glycine 98, aspartate 299, and aspartate 345 each coordinate Mn(2+).

It belongs to the PP2C family. It depends on Mg(2+) as a cofactor. Mn(2+) serves as cofactor.

The enzyme catalyses O-phospho-L-seryl-[protein] + H2O = L-seryl-[protein] + phosphate. The catalysed reaction is O-phospho-L-threonyl-[protein] + H2O = L-threonyl-[protein] + phosphate. In Arabidopsis thaliana (Mouse-ear cress), this protein is Probable protein phosphatase 2C 73 (PPC6-7).